The sequence spans 692 residues: MARLVPLEKTRNIGIMAHIDAGKTTTTERILYYTGVTHKIGEVHEGAATMDWMEQEQERGITITSAATTCNWGDHRINIIDTPGHVDFTIEVERSLRVLDGAVAVFCSVGGVEPQSETVWRQADKYGVPRIAFVNKMDRVGADFFRGVSMIRDRLKANPVPIQLPIGAEDTFKGVVDLVEMKAIVWDEESLGAKFHVEEIPADLQELAQEYHEKMVEEISSHDDALMEKYLGGEELTVDEVRAAIRNATIAIQICPVICGSSFKNKGVQNLLDSVVEYLPSPVDIPAIKGVDADSGAEIERKAADSEPFAALAFKIMTDPFVGQLCFIRVYSGVLNSGSYVYNSTKGKKERIGRLLKMHANKREEIKEVLAGDIAAAVGLKYTTTGDTLCPEDAPVILESIEFPEPVIAIAIEPKTKADQEKLGISLQKLASEDPSFRVRTDEETGQTIISGMGELHLEIIVDRLMREFKVEANVGKPQVAYRETVTKKVKVEGKFVRQSGGRGQYGHVWIEMEPQEPGKGYEFVDAIKGGVVPREYIPAVDKGIQEAMDTGVLAGFPCVDFKVSLVDGSYHEVDSSEMAFKIAGSMAFKEAAAKASPVLLEPIMSVEVVVPEEYMGDVIGDLNSRRGRIMGMEGRAGAQVVSAMVPLAQMFGYATDLRSATQGRATYTMTFDHYEQVPKSVSEEIIAKVKG.

In terms of domain architecture, tr-type G spans 8 to 283 (EKTRNIGIMA…SVVEYLPSPV (276 aa)). Residues 17–24 (AHIDAGKT), 81–85 (DTPGH), and 135–138 (NKMD) contribute to the GTP site.

This sequence belongs to the TRAFAC class translation factor GTPase superfamily. Classic translation factor GTPase family. EF-G/EF-2 subfamily.

It localises to the cytoplasm. Functionally, catalyzes the GTP-dependent ribosomal translocation step during translation elongation. During this step, the ribosome changes from the pre-translocational (PRE) to the post-translocational (POST) state as the newly formed A-site-bound peptidyl-tRNA and P-site-bound deacylated tRNA move to the P and E sites, respectively. Catalyzes the coordinated movement of the two tRNA molecules, the mRNA and conformational changes in the ribosome. The polypeptide is Elongation factor G 1 (Geobacter metallireducens (strain ATCC 53774 / DSM 7210 / GS-15)).